The chain runs to 460 residues: NADH-ubiquinone oxidoreductase chain 4 (460 aa).

13 helical membrane-spanning segments follow: residues 22–42, 59–79, 94–113, 117–139, 148–168, 195–215, 231–251, 258–278, 286–306, 310–330, 343–362, 394–414, and 436–456; these read WLWS…LSWF, IDPL…LMIL, RIYI…AFSA, ILFY…RWGN, TYFL…LLFM, FWWT…GVHL, ILAA…IIML, MAYP…SICL, MIAY…LIQT, FAGA…LFCL, LLLA…WWLL, ILLT…MFLM, and LLLT…ELIW.

It belongs to the complex I subunit 4 family.

The protein localises to the mitochondrion membrane. It carries out the reaction a ubiquinone + NADH + 5 H(+)(in) = a ubiquinol + NAD(+) + 4 H(+)(out). Functionally, core subunit of the mitochondrial membrane respiratory chain NADH dehydrogenase (Complex I) that is believed to belong to the minimal assembly required for catalysis. Complex I functions in the transfer of electrons from NADH to the respiratory chain. The immediate electron acceptor for the enzyme is believed to be ubiquinone. The polypeptide is NADH-ubiquinone oxidoreductase chain 4 (MTND4) (Scyliorhinus canicula (Small-spotted catshark)).